A 179-amino-acid chain; its full sequence is Large ribosomal subunit protein uL6 (179 aa).

This sequence belongs to the universal ribosomal protein uL6 family. In terms of assembly, part of the 50S ribosomal subunit.

This protein binds to the 23S rRNA, and is important in its secondary structure. It is located near the subunit interface in the base of the L7/L12 stalk, and near the tRNA binding site of the peptidyltransferase center. The sequence is that of Large ribosomal subunit protein uL6 from Koribacter versatilis (strain Ellin345).